Consider the following 734-residue polypeptide: Photosystem I P700 chlorophyll a apoprotein A2 (734 aa).

8 consecutive transmembrane segments (helical) span residues Ile-46 to Ala-69, Leu-135 to Gln-158, Leu-175 to Ile-199, Met-273 to Tyr-291, Leu-330 to Tyr-353, Ala-369 to Ile-395, Ala-417 to His-439, and Phe-517 to Val-535. Residues Cys-559 and Cys-568 each contribute to the [4Fe-4S] cluster site. The next 2 helical transmembrane spans lie at Ala-575 to Trp-596 and Leu-643 to Ile-665. Chlorophyll a contacts are provided by His-654, Met-662, and Tyr-670. A phylloquinone-binding site is contributed by Trp-671. The helical transmembrane segment at Leu-707–Ala-727 threads the bilayer.

It belongs to the PsaA/PsaB family. The PsaA/B heterodimer binds the P700 chlorophyll special pair and subsequent electron acceptors. PSI consists of a core antenna complex that captures photons, and an electron transfer chain that converts photonic excitation into a charge separation. The eukaryotic PSI reaction center is composed of at least 11 subunits. Requires P700 is a chlorophyll a/chlorophyll a' dimer, A0 is one or more chlorophyll a, A1 is one or both phylloquinones and FX is a shared 4Fe-4S iron-sulfur center. as cofactor.

It localises to the plastid. It is found in the chloroplast thylakoid membrane. It catalyses the reaction reduced [plastocyanin] + hnu + oxidized [2Fe-2S]-[ferredoxin] = oxidized [plastocyanin] + reduced [2Fe-2S]-[ferredoxin]. PsaA and PsaB bind P700, the primary electron donor of photosystem I (PSI), as well as the electron acceptors A0, A1 and FX. PSI is a plastocyanin-ferredoxin oxidoreductase, converting photonic excitation into a charge separation, which transfers an electron from the donor P700 chlorophyll pair to the spectroscopically characterized acceptors A0, A1, FX, FA and FB in turn. Oxidized P700 is reduced on the lumenal side of the thylakoid membrane by plastocyanin. This is Photosystem I P700 chlorophyll a apoprotein A2 from Solanum tuberosum (Potato).